Here is a 1344-residue protein sequence, read N- to C-terminus: Regulatory-associated protein of TOR 1 (1344 aa).

Residues 28-44 (CVSSHDDGDSRRKDSEA) are compositionally biased toward basic and acidic residues. Disordered stretches follow at residues 28-56 (CVSS…GTTE) and 771-818 (ASTD…DSVS). The span at 785–816 (SSSPLGSSGLMQGSPLSDDSSLHSDSGMMHDS) shows a compositional bias: low complexity. 7 WD repeats span residues 1025-1064 (RFET…LLNG), 1070-1111 (FPDK…GKQK), 1125-1164 (GARD…LVRS), 1168-1208 (ESEC…PLVC), 1214-1255 (QKVE…DTYL), 1259-1298 (AHRG…LGII), and 1307-1344 (QKIG…SQAR).

Belongs to the WD repeat RAPTOR family. As to quaternary structure, interacts with TOR, ATPK1 and ML1. Interacts with KIN10. In terms of processing, phosphorylated by KIN10. Expressed in roots, leaves, flowers and seeds.

Its subcellular location is the cytoplasm. Probable component of the plant TOR kinase pathway that recruits substrates for TOR. Modulates plant cell growth and regulates the activity of ATPK1 kinase in response to osmotic stress. The protein is Regulatory-associated protein of TOR 1 (RAPTOR1) of Arabidopsis thaliana (Mouse-ear cress).